Reading from the N-terminus, the 311-residue chain is MKVAVLGAAGGIGQALSLLLKTQLPAGTELALYDVAPVVPGVAVDLSHIPTDVKVEGFGKDDLAKALTGSDIVLIPAGVPRKPGMDRSDLFNINAGIVRNLVDSVADNCPEACLCIITNPVNTTVAIAAEALKAKGVYNKNKLFGVTTLDVIRAETFVGNLRDLNPANVHVPVIGGHSGTTILPLLSQVEGVEFTDEEVASLTTRIQNAGTEVVEAKAGGGSATLSMGQAAARFCLSLVSAMRGENVVEYTYVETNSDDAQFFSHPVRLGKNGVEEILPYGELSDFEQKAKESMLEGLRGDIKLGVEFVNN.

NAD(+)-binding positions include 7 to 13 (GAAGGIG) and aspartate 34. Arginine 81 and arginine 87 together coordinate substrate. Residues asparagine 94 and 117 to 119 (ITN) each bind NAD(+). Asparagine 119 and arginine 153 together coordinate substrate. Histidine 177 serves as the catalytic Proton acceptor. An NAD(+)-binding site is contributed by methionine 227.

It belongs to the LDH/MDH superfamily. MDH type 1 family. Homodimer.

The catalysed reaction is (S)-malate + NAD(+) = oxaloacetate + NADH + H(+). Catalyzes the reversible oxidation of malate to oxaloacetate. The polypeptide is Malate dehydrogenase (Pseudoalteromonas atlantica (strain T6c / ATCC BAA-1087)).